A 118-amino-acid polypeptide reads, in one-letter code: Hydrogenase maturation factor HypA (118 aa).

A Ni(2+)-binding site is contributed by histidine 2. Positions 73, 76, 93, and 96 each coordinate Zn(2+).

Belongs to the HypA/HybF family.

Its function is as follows. Involved in the maturation of [NiFe] hydrogenases. Required for nickel insertion into the metal center of the hydrogenase. This Lawsonia intracellularis (strain PHE/MN1-00) protein is Hydrogenase maturation factor HypA.